We begin with the raw amino-acid sequence, 182 residues long: MKIKTLAIVVLSALSLSSTAALAAATTVNGGTVHFKGEVVNAACAVDAGSVDQTVQLGQVRTASLAQEGATSSAVGFNIQLNDCDTNVASKAAVAFLGTAIDAGHTNVLALQSSAAGSATNVGVQILDRTGAALTLDGATFSSETTLNNGTNTIPFQARYFATGAATPGAANADATFKVQYQ.

The signal sequence occupies residues 1 to 23 (MKIKTLAIVVLSALSLSSTAALA). Cysteine 44 and cysteine 84 form a disulfide bridge.

This sequence belongs to the fimbrial protein family.

Its subcellular location is the fimbrium. Functionally, fimbriae (also called pili), polar filaments radiating from the surface of the bacterium to a length of 0.5-1.5 micrometers and numbering 100-300 per cell, enable bacteria to colonize the epithelium of specific host organs. The protein is Type-1 fimbrial protein, A chain (fimA) of Escherichia coli (strain K12).